Here is a 280-residue protein sequence, read N- to C-terminus: Energy-coupling factor transporter ATP-binding protein EcfA2 (280 aa).

In terms of domain architecture, ABC transporter spans 3–245 (IEFKNVSYTY…VELLESKQLG (243 aa)). 40–47 (GHTGSGKS) provides a ligand contact to ATP.

It belongs to the ABC transporter superfamily. Energy-coupling factor EcfA family. Forms a stable energy-coupling factor (ECF) transporter complex composed of 2 membrane-embedded substrate-binding proteins (S component), 2 ATP-binding proteins (A component) and 2 transmembrane proteins (T component).

The protein localises to the cell membrane. In terms of biological role, ATP-binding (A) component of a common energy-coupling factor (ECF) ABC-transporter complex. Unlike classic ABC transporters this ECF transporter provides the energy necessary to transport a number of different substrates. This is Energy-coupling factor transporter ATP-binding protein EcfA2 from Streptococcus agalactiae serotype Ia (strain ATCC 27591 / A909 / CDC SS700).